The sequence spans 130 residues: Small ribosomal subunit protein uS9 (130 aa).

Belongs to the universal ribosomal protein uS9 family.

The protein is Small ribosomal subunit protein uS9 of Enterococcus faecalis (strain ATCC 700802 / V583).